Consider the following 231-residue polypeptide: Urease accessory protein UreE (231 aa).

The disordered stretch occupies residues 185-231 (VASPLDEPHGSGLHIHGIHSHGEGHSHGDHDHDHSHSHGDHDHDHKH). A compositionally biased stretch (basic and acidic residues) spans 204–231 (SHGEGHSHGDHDHDHSHSHGDHDHDHKH).

It belongs to the UreE family.

Its subcellular location is the cytoplasm. Functionally, involved in urease metallocenter assembly. Binds nickel. Probably functions as a nickel donor during metallocenter assembly. The chain is Urease accessory protein UreE from Yersinia pseudotuberculosis serotype O:1b (strain IP 31758).